A 766-amino-acid chain; its full sequence is MALAHNLGFPRIGADRELKKALEAYWKGDLDQTGLRAVGQQLRAAHWQVQKEAGIELLPVGDFAWYDQVLTHSLTLGVIPERFSPAQDAAGLPTLDTLFAMARGASNCCGASHGKTQHAQELTKWFDTNYHYLVPEFTQDQRFQLSWEQLFEEVDEAHALGHKVKPVLIGPLTYLWLGKAKGDSFDRLELLDRLLPVYGEILGRLAAQGVEWVQFDEPVLTLDLPQDWKTAFERAYHSLQYSPLKKLVATYFGGLEDNLGLAATLPVDGLHIDLVRAPEQLPAVLDRLPSYKVLSLGVVNGRNVWRCDLDNALAALQQAHARFGDNLWVAGSCSLLHSPVDLNREDRLDPELKGWLAFAVQKSREIAILSHALNDPEATEVVEALAQSCEIQASRAQSSRVHNPQVQARLASVTAADHQRRSAFAERITVQRERLKLPAFPTTTIGSFPQTSAIRLARQAHKQGKLSLNDYTDAMRHEIRHAVQVQENLGLDVLVHGEAERNDMVEYFAEQLDGYLFTRFGWVQSYGSRCVKPAIIFGDLSRPQPMTVDWIRYAQSLTDKTMKGMLTGPVTMLMWSFSREDVSRQVQAQQLALAIRDEVLDLERAGIKIVQIDEAAFREGLPLRKAQWQQYLDWAVAAFRLCASGVRDETQIHTHMCYSEFNDVIKSIAAMDADVITIETSRSDMELLDAFEAFDYPNDIGPGVYDIHSPRVPETAEMVSLIAKAARRIPAERLWVNPDCGLKTRGWPETEAALINMVAAARQLRL.

Residues 16 to 19 (RELK) and Lys124 contribute to the 5-methyltetrahydropteroyltri-L-glutamate site. Residues 445–447 (IGS) and Glu498 each bind L-homocysteine. L-methionine is bound by residues 445-447 (IGS) and Glu498. 5-methyltetrahydropteroyltri-L-glutamate contacts are provided by residues 529–530 (RC) and Trp575. Asp613 provides a ligand contact to L-homocysteine. Asp613 serves as a coordination point for L-methionine. Glu619 serves as a coordination point for 5-methyltetrahydropteroyltri-L-glutamate. The Zn(2+) site is built by His655, Cys657, and Glu679. The active-site Proton donor is His708. Cys740 is a binding site for Zn(2+).

This sequence belongs to the vitamin-B12 independent methionine synthase family. Zn(2+) serves as cofactor.

It carries out the reaction 5-methyltetrahydropteroyltri-L-glutamate + L-homocysteine = tetrahydropteroyltri-L-glutamate + L-methionine. It functions in the pathway amino-acid biosynthesis; L-methionine biosynthesis via de novo pathway; L-methionine from L-homocysteine (MetE route): step 1/1. Functionally, catalyzes the transfer of a methyl group from 5-methyltetrahydrofolate to homocysteine resulting in methionine formation. The protein is 5-methyltetrahydropteroyltriglutamate--homocysteine methyltransferase of Pseudomonas syringae pv. tomato (strain ATCC BAA-871 / DC3000).